The sequence spans 226 residues: ATP synthase F(0) complex subunit a (226 aa).

6 consecutive transmembrane segments (helical) span residues 5 to 25, 68 to 88, 97 to 117, 138 to 158, 160 to 180, and 189 to 209; these read LFASFIAPTILGLPAAVLIIL, WSLMLMWLIIFIATTNLLGLL, QLSMNLAMAIPLWAGAVTTGF, IPMLVIIETISLFIQPMALAV, LTANITAGHLLMHLIGSATLA, and TLIIFTVLILLTMLEIAVALI.

Belongs to the ATPase A chain family. Component of the ATP synthase complex composed at least of ATP5F1A/subunit alpha, ATP5F1B/subunit beta, ATP5MC1/subunit c (homooctomer), MT-ATP6/subunit a, MT-ATP8/subunit 8, ATP5ME/subunit e, ATP5MF/subunit f, ATP5MG/subunit g, ATP5MK/subunit k, ATP5MJ/subunit j, ATP5F1C/subunit gamma, ATP5F1D/subunit delta, ATP5F1E/subunit epsilon, ATP5PF/subunit F6, ATP5PB/subunit b, ATP5PD/subunit d, ATP5PO/subunit OSCP. ATP synthase complex consists of a soluble F(1) head domain (subunits alpha(3) and beta(3)) - the catalytic core - and a membrane F(0) domain - the membrane proton channel (subunits c, a, 8, e, f, g, k and j). These two domains are linked by a central stalk (subunits gamma, delta, and epsilon) rotating inside the F1 region and a stationary peripheral stalk (subunits F6, b, d, and OSCP). Interacts with DNAJC30; interaction is direct.

The protein localises to the mitochondrion inner membrane. It catalyses the reaction H(+)(in) = H(+)(out). Its function is as follows. Subunit a, of the mitochondrial membrane ATP synthase complex (F(1)F(0) ATP synthase or Complex V) that produces ATP from ADP in the presence of a proton gradient across the membrane which is generated by electron transport complexes of the respiratory chain. ATP synthase complex consist of a soluble F(1) head domain - the catalytic core - and a membrane F(1) domain - the membrane proton channel. These two domains are linked by a central stalk rotating inside the F(1) region and a stationary peripheral stalk. During catalysis, ATP synthesis in the catalytic domain of F(1) is coupled via a rotary mechanism of the central stalk subunits to proton translocation. With the subunit c (ATP5MC1), forms the proton-conducting channel in the F(0) domain, that contains two crucial half-channels (inlet and outlet) that facilitate proton movement from the mitochondrial intermembrane space (IMS) into the matrix. Protons are taken up via the inlet half-channel and released through the outlet half-channel, following a Grotthuss mechanism. This chain is ATP synthase F(0) complex subunit a, found in Gorilla gorilla gorilla (Western lowland gorilla).